Consider the following 383-residue polypeptide: Putative F-box/kelch-repeat protein At1g62270 (383 aa).

The region spanning 6–51 is the F-box domain; it reads TSSFSSLPWDLVEDILARVPATSLKRLRSTCKQWNFLFNDQIFTKM. Kelch repeat units follow at residues 110-158, 160-211, and 349-383; these read KVFH…YGNY, SCYN…LRGN, and TVYI…LVQI.

The protein is Putative F-box/kelch-repeat protein At1g62270 of Arabidopsis thaliana (Mouse-ear cress).